Consider the following 454-residue polypeptide: Golgi reassembly-stacking protein 2 (454 aa).

Gly-2 carries N-myristoyl glycine lipidation. PDZ GRASP-type domains lie at 15-105 and 111-199; these read EGYH…FCSF and NVWH…YGYL. The GRASP stretch occupies residues 15-215; sequence EGYHVLRVQE…PFEEGKKISL (201 aa). Arg-30 and Arg-47 each carry dimethylated arginine. Residues 194–199 are important for membrane binding; it reads IGYGYL. Residue Ser-214 is modified to Phosphoserine. Thr-222 bears the Phosphothreonine mark. Thr-225 bears the Phosphothreonine; by MAPK mark. Positions 377–454 are disordered; the sequence is EGSSAASAGE…VTDANASGAS (78 aa). Ser-411 is subject to Phosphoserine. Thr-435 bears the Phosphothreonine mark. Residues Ser-443 and Ser-451 each carry the phosphoserine modification.

It belongs to the GORASP family. As to quaternary structure, homodimer. Homooligomer. ER stress induces phosphorylation-dependent monomerization. Interacts with BLZF1/Golgin 45. Identified in a complex with RAB2 and GORASP2. Interacts with JAM2 and JAM3. Interacts with members of the p24 cargo receptors. Interacts with CNIH1 and the cytoplasmic domain of transmembrane TGFA, prior its transit in the trans-Golgi. Interacts with KCTD5. Interacts with TMED2 and TMED3. Interacts with SEC16A in response to ER stress. Interacts (via PDZ GRASP-type 1 domain) with core-glycosylated CFTR in response to ER stress. Post-translationally, myristoylated. Myristoylation is essential for the Golgi targeting. Palmitoylated. In terms of processing, phosphorylated in mitotic cells. ER stress-induced phosphorylation at Ser-443 induces monomerization and subsequent relocalization from Golgi to ER which is essential for mediating unconventional (ER/Golgi-independent) trafficking of CFTR to the cell membrane. As to expression, detected in lung, brain, heart, liver and testis.

The protein localises to the golgi apparatus membrane. Its subcellular location is the endoplasmic reticulum membrane. It localises to the golgi apparatus. In terms of biological role, key structural protein of the Golgi apparatus. The membrane cisternae of the Golgi apparatus adhere to each other to form stacks, which are aligned side by side to form the Golgi ribbon. Acting in concert with GORASP1/GRASP65, is required for the formation and maintenance of the Golgi ribbon, and may be dispensable for the formation of stacks. However, other studies suggest that GORASP2 plays a role in the assembly and membrane stacking of the Golgi cisternae, and in the process by which Golgi stacks reform after breakdown during mitosis and meiosis. May regulate the intracellular transport and presentation of a defined set of transmembrane proteins, such as transmembrane TGFA. Required for normal acrosome formation during spermiogenesis and normal male fertility, probably by promoting colocalization of JAM2 and JAM3 at contact sites between germ cells and Sertoli cells. Mediates ER stress-induced unconventional (ER/Golgi-independent) trafficking of core-glycosylated CFTR to cell membrane. In Rattus norvegicus (Rat), this protein is Golgi reassembly-stacking protein 2 (Gorasp2).